A 100-amino-acid chain; its full sequence is Small ribosomal subunit protein bS20 (100 aa).

A compositionally biased stretch (basic and acidic residues) spans M1–R18. The tract at residues M1–K26 is disordered.

This sequence belongs to the bacterial ribosomal protein bS20 family.

Binds directly to 16S ribosomal RNA. The polypeptide is Small ribosomal subunit protein bS20 (Petrotoga mobilis (strain DSM 10674 / SJ95)).